The following is a 225-amino-acid chain: Imidazole glycerol phosphate synthase subunit HisH (225 aa).

In terms of domain architecture, Glutamine amidotransferase type-1 spans 3-225 (TIAIVDYGMG…LYRNFVDWQP (223 aa)). The active-site Nucleophile is the C82. Active-site residues include H205 and E207.

Heterodimer of HisH and HisF.

It is found in the cytoplasm. It catalyses the reaction 5-[(5-phospho-1-deoxy-D-ribulos-1-ylimino)methylamino]-1-(5-phospho-beta-D-ribosyl)imidazole-4-carboxamide + L-glutamine = D-erythro-1-(imidazol-4-yl)glycerol 3-phosphate + 5-amino-1-(5-phospho-beta-D-ribosyl)imidazole-4-carboxamide + L-glutamate + H(+). It carries out the reaction L-glutamine + H2O = L-glutamate + NH4(+). The protein operates within amino-acid biosynthesis; L-histidine biosynthesis; L-histidine from 5-phospho-alpha-D-ribose 1-diphosphate: step 5/9. Its function is as follows. IGPS catalyzes the conversion of PRFAR and glutamine to IGP, AICAR and glutamate. The HisH subunit catalyzes the hydrolysis of glutamine to glutamate and ammonia as part of the synthesis of IGP and AICAR. The resulting ammonia molecule is channeled to the active site of HisF. The sequence is that of Imidazole glycerol phosphate synthase subunit HisH from Bordetella pertussis (strain Tohama I / ATCC BAA-589 / NCTC 13251).